Consider the following 136-residue polypeptide: Aspartate 1-decarboxylase (136 aa).

Serine 25 (schiff-base intermediate with substrate; via pyruvic acid) is an active-site residue. At serine 25 the chain carries Pyruvic acid (Ser). Residue threonine 57 coordinates substrate. The Proton donor role is filled by tyrosine 58. 73-75 (GAA) is a binding site for substrate. The tract at residues 117-136 (IFQLGEETTPEEAPSLEQRN) is disordered.

The protein belongs to the PanD family. As to quaternary structure, heterooctamer of four alpha and four beta subunits. Requires pyruvate as cofactor. Is synthesized initially as an inactive proenzyme, which is activated by self-cleavage at a specific serine bond to produce a beta-subunit with a hydroxyl group at its C-terminus and an alpha-subunit with a pyruvoyl group at its N-terminus.

Its subcellular location is the cytoplasm. It carries out the reaction L-aspartate + H(+) = beta-alanine + CO2. The protein operates within cofactor biosynthesis; (R)-pantothenate biosynthesis; beta-alanine from L-aspartate: step 1/1. Functionally, catalyzes the pyruvoyl-dependent decarboxylation of aspartate to produce beta-alanine. In Chloroherpeton thalassium (strain ATCC 35110 / GB-78), this protein is Aspartate 1-decarboxylase.